A 607-amino-acid chain; its full sequence is Cytosolic Fe-S cluster assembly factor NAR1 (607 aa).

6 residues coordinate [4Fe-4S] cluster: Cys-20, Cys-82, Cys-85, Cys-88, Cys-204, and Cys-259. A disordered region spans residues 430-476; the sequence is KPNTGKSTNTTTTTTKSKVNPLAARRRARIANNRGKPETKSTSEVNS. Positions 432–447 are enriched in low complexity; sequence NTGKSTNTTTTTTKSK. [4Fe-4S] cluster-binding residues include Cys-496 and Cys-500.

Belongs to the NARF family.

Functionally, component of the cytosolic Fe/S protein assembly machinery. Required for maturation of extramitochondrial Fe/S proteins. May play a role in the transfer of pre-assembled Fe/S clusters to target apoproteins. In Candida albicans (strain SC5314 / ATCC MYA-2876) (Yeast), this protein is Cytosolic Fe-S cluster assembly factor NAR1 (NAR1).